The chain runs to 209 residues: Probable nicotinate-nucleotide adenylyltransferase (209 aa).

It belongs to the NadD family.

It catalyses the reaction nicotinate beta-D-ribonucleotide + ATP + H(+) = deamido-NAD(+) + diphosphate. It participates in cofactor biosynthesis; NAD(+) biosynthesis; deamido-NAD(+) from nicotinate D-ribonucleotide: step 1/1. Catalyzes the reversible adenylation of nicotinate mononucleotide (NaMN) to nicotinic acid adenine dinucleotide (NaAD). The sequence is that of Probable nicotinate-nucleotide adenylyltransferase from Shewanella woodyi (strain ATCC 51908 / MS32).